A 31-amino-acid polypeptide reads, in one-letter code: Cyclotide mden-M (31 aa).

A cross-link (cyclopeptide (Gly-Asn)) is located at residues 1 to 31; sequence GTIPCGESCVYIPCITSALGCSCKKKVCYKN. 3 disulfide bridges follow: Cys-5–Cys-21, Cys-9–Cys-23, and Cys-14–Cys-28.

The protein belongs to the cyclotide family. Bracelet subfamily. Post-translationally, this is a cyclic peptide.

Functionally, probably participates in a plant defense mechanism. In Melicytus dentatus (Tree violet), this protein is Cyclotide mden-M.